The primary structure comprises 109 residues: Aquaporin-2 (109 aa).

Over 1-6 (SIAFSR) the chain is Cytoplasmic. Residues 7–27 (AVFSEFLATLLFVFFGLGSAL) form a helical membrane-spanning segment. Over 28–35 (NWPQALPS) the chain is Extracellular. A helical transmembrane segment spans residues 36–54 (VLQIAMAFGLAIGTLVQTL). Residues 55 to 59 (GHISG) lie on the Cytoplasmic side of the membrane. Residues 60-69 (AHINPAVTVA) constitute an intramembrane region (discontinuously helical). Residues 63–65 (NPA) carry the NPA 1 motif. Over 70–80 (CLVGCHVSFLR) the chain is Cytoplasmic. Residues 81–102 (ATFYVAAQLLGAVAGAALLHEL) traverse the membrane as a helical segment. Residues 103 to 109 (TPPDIRG) lie on the Extracellular side of the membrane.

Belongs to the MIP/aquaporin (TC 1.A.8) family. Homotetramer. Post-translationally, serine phosphorylation is necessary and sufficient for expression at the apical membrane. Endocytosis is not phosphorylation-dependent. N-glycosylated.

It is found in the apical cell membrane. The protein resides in the basolateral cell membrane. It localises to the cell membrane. The protein localises to the cytoplasmic vesicle membrane. Its subcellular location is the golgi apparatus. It is found in the trans-Golgi network membrane. The enzyme catalyses H2O(in) = H2O(out). It catalyses the reaction glycerol(in) = glycerol(out). In terms of biological role, forms a water-specific channel that provides the plasma membranes of renal collecting duct with high permeability to water, thereby permitting water to move in the direction of an osmotic gradient. Plays an essential role in renal water homeostasis. Could also be permeable to glycerol. The protein is Aquaporin-2 of Amblysomus hottentotus (Hottentot golden mole).